The primary structure comprises 473 residues: Glutamate--tRNA ligase 2 (473 aa).

The short motif at 11–21 is the 'HIGH' region element; sequence PSPTGYLHIGG. The span at 113-133 shows a compositional bias: basic and acidic residues; that stretch reads KARAEGRPPRYDGRWRDRDPS. The tract at residues 113–136 is disordered; the sequence is KARAEGRPPRYDGRWRDRDPSEAP. The 'KMSKS' region signature appears at 240–244; the sequence is KLSKR. K243 is a binding site for ATP.

This sequence belongs to the class-I aminoacyl-tRNA synthetase family. Glutamate--tRNA ligase type 1 subfamily. As to quaternary structure, monomer.

The protein resides in the cytoplasm. It catalyses the reaction tRNA(Glu) + L-glutamate + ATP = L-glutamyl-tRNA(Glu) + AMP + diphosphate. Functionally, catalyzes the attachment of glutamate to tRNA(Glu) in a two-step reaction: glutamate is first activated by ATP to form Glu-AMP and then transferred to the acceptor end of tRNA(Glu). In Brucella abortus (strain S19), this protein is Glutamate--tRNA ligase 2.